A 121-amino-acid polypeptide reads, in one-letter code: Large ribosomal subunit protein uL18 (121 aa).

The protein belongs to the universal ribosomal protein uL18 family. Part of the 50S ribosomal subunit; part of the 5S rRNA/L5/L18/L25 subcomplex. Contacts the 5S and 23S rRNAs.

In terms of biological role, this is one of the proteins that bind and probably mediate the attachment of the 5S RNA into the large ribosomal subunit, where it forms part of the central protuberance. This chain is Large ribosomal subunit protein uL18, found in Ureaplasma parvum serovar 3 (strain ATCC 27815 / 27 / NCTC 11736).